A 91-amino-acid chain; its full sequence is Cytochrome b-c1 complex subunit 6, mitochondrial (91 aa).

Residues 1-10 (MGLEDERKML) show a composition bias toward basic and acidic residues. Residues 1-13 (MGLEDERKMLTES) constitute a mitochondrion transit peptide. Residues 1–30 (MGLEDERKMLTESGDPEKEEEEEEELVDPL) form a disordered region. Positions 17–27 (EKEEEEEEELV) are enriched in acidic residues. Cystine bridges form between Cys37–Cys81 and Cys53–Cys67. Lys42 is modified (N6-acetyllysine). Lys85 bears the N6-acetyllysine mark.

Belongs to the UQCRH/QCR6 family. In terms of assembly, component of the ubiquinol-cytochrome c oxidoreductase (cytochrome b-c1 complex, complex III, CIII), a multisubunit enzyme composed of 11 subunits. The complex is composed of 3 respiratory subunits cytochrome b, cytochrome c1 and Rieske protein UQCRFS1, 2 core protein subunits UQCRC1/QCR1 and UQCRC2/QCR2, and 6 low-molecular weight protein subunits UQCRH/QCR6, UQCRB/QCR7, UQCRQ/QCR8, UQCR10/QCR9, UQCR11/QCR10 and subunit 9, the cleavage product of Rieske protein UQCRFS1. The complex exists as an obligatory dimer and forms supercomplexes (SCs) in the inner mitochondrial membrane with NADH-ubiquinone oxidoreductase (complex I, CI) and cytochrome c oxidase (complex IV, CIV), resulting in different assemblies (supercomplex SCI(1)III(2)IV(1) and megacomplex MCI(2)III(2)IV(2)).

It localises to the mitochondrion inner membrane. Functionally, component of the ubiquinol-cytochrome c oxidoreductase, a multisubunit transmembrane complex that is part of the mitochondrial electron transport chain which drives oxidative phosphorylation. The respiratory chain contains 3 multisubunit complexes succinate dehydrogenase (complex II, CII), ubiquinol-cytochrome c oxidoreductase (cytochrome b-c1 complex, complex III, CIII) and cytochrome c oxidase (complex IV, CIV), that cooperate to transfer electrons derived from NADH and succinate to molecular oxygen, creating an electrochemical gradient over the inner membrane that drives transmembrane transport and the ATP synthase. The cytochrome b-c1 complex catalyzes electron transfer from ubiquinol to cytochrome c, linking this redox reaction to translocation of protons across the mitochondrial inner membrane, with protons being carried across the membrane as hydrogens on the quinol. In the process called Q cycle, 2 protons are consumed from the matrix, 4 protons are released into the intermembrane space and 2 electrons are passed to cytochrome c. The protein is Cytochrome b-c1 complex subunit 6, mitochondrial (UQCRH) of Macaca fascicularis (Crab-eating macaque).